A 62-amino-acid polypeptide reads, in one-letter code: Large ribosomal subunit protein bL28 (62 aa).

Belongs to the bacterial ribosomal protein bL28 family.

The sequence is that of Large ribosomal subunit protein bL28 from Thermoanaerobacter pseudethanolicus (strain ATCC 33223 / 39E) (Clostridium thermohydrosulfuricum).